We begin with the raw amino-acid sequence, 495 residues long: 4-aminobutyrate aminotransferase (495 aa).

Residue 160-161 (GS) participates in pyridoxal 5'-phosphate binding. Arg-216 contacts substrate. Residue Lys-350 is modified to N6-(pyridoxal phosphate)lysine. Thr-374 contacts pyridoxal 5'-phosphate.

It belongs to the class-III pyridoxal-phosphate-dependent aminotransferase family. Homodimer. Requires pyridoxal 5'-phosphate as cofactor.

The enzyme catalyses 4-aminobutanoate + 2-oxoglutarate = succinate semialdehyde + L-glutamate. The sequence is that of 4-aminobutyrate aminotransferase (gabT) from Dictyostelium discoideum (Social amoeba).